Consider the following 1129-residue polypeptide: MVLSNVDAEEVNMDSSMELEESSQEPLRADNYEEIYNSLVHHEPDLEEAAHASYSWVVKNFSTLEDKTYSPLFKAGHTTWRIVLFPKGCNQTEYASVFLEYLPQCKVEAIRKYEAELAAGKTPTIDPEIVNDETYSCCAQFALSLSNVQDPTVMQINTSHHRFRSEVKDWGFTRFVDLRKIAVPTPEFPVPFLENDEICISVTVRVLQDPTGVLWHSFVNYNSKKETGYVGLKNQGATCYMNSLLQSLFFTNIFRKTVYKIPTDNDDSRDSVAYALQRVFYNLEKQREPVSTTELTRSFGWNSFDSFMQHDIQEFNRVLQDNLEKKMKGTEVENALNDIFVGKMKSYVKCIDVNYESSRVEDFWDIQLNVKGMDTLEDSFRDAIQVETLTGDNKYYAEGHGLQDAHKGIIFESLPNVLQLQLKRFDYDMLRDMMVKINDRHEFPLEIDLEPYLSETADKSESHVYVLHGVLVHGGDLHGGHYYALIKPEKDSNWFKFDDDRVTRATIKEVLEDNYGGEPAGRAKGYNGNPFKRFMNAYMLVYFRKSRLDHILSPVTAEDVPFHVRNTLDEEHRVVERKLLEREEQQIYRRVRVLTTDGFKKYHGFDMTDFSASDDDPVLITTKIKRNANIWDLQKHLAGLLNRDTSGIRIWLMTNRQNRTVRVDLPLDKKTILVDQICDMHIRKDMDMRVYVEFLSEHNQLLADFGATDDNDFDTYIFLKIFDYETQQISGLADLHVSKNSPISSLSEWIREHLKWSSDVPITYYEEIKTGMVDVLDPNASFEKSEIQVGDIICFEKKLVHDSSSDTSHPYKSALDLYDFMAHRVVITFEPRYSDDTNNGVFDLVLTTHTNYTDMARAVANKLNVDPNYLQFTMAHLPSRTPRSVIRNPSKFTLQNAIPSTYSHNQNVVMFYEVLDITLSELERKQLIRVHFLSNGISHETQMEFYVDKEGTVEDILRQVTQKVPLNAEDASRLRLYEVYNHRILKSHLPTDGIYDLNEFSTAYVEVTPKEEQMQLKTDDAVSIVVQHFFKDLSRLHDIPFYFVLLRGETLKDLKKRLQKRLGYNDTQFSKVKLAVLQAQSFGKPYYLTDDDEVLYGELEPQSHILGLDHPPANGSAQYHGMDQAIRMK.

A disordered region spans residues Met-1–Pro-26. A compositionally biased stretch (acidic residues) spans Asp-7–Ser-23. Positions His-51–Val-204 constitute an MATH domain. One can recognise a USP domain in the interval Val-230–Lys-545. The active-site Nucleophile is the Cys-239. Residue His-481 is the Proton acceptor of the active site.

Belongs to the peptidase C19 family.

It is found in the nucleus. It catalyses the reaction Thiol-dependent hydrolysis of ester, thioester, amide, peptide and isopeptide bonds formed by the C-terminal Gly of ubiquitin (a 76-residue protein attached to proteins as an intracellular targeting signal).. In terms of biological role, hydrolase that deubiquitinates target proteins. Cleaves the UBL propeptide in sde2. Involved in regulating the steady-state levels of proteins including prp4. The chain is Ubiquitin carboxyl-terminal hydrolase 15 from Schizosaccharomyces pombe (strain 972 / ATCC 24843) (Fission yeast).